Here is a 244-residue protein sequence, read N- to C-terminus: Adenosine 5'-phosphosulfate reductase (244 aa).

Positions 129, 130, 212, and 215 each coordinate [4Fe-4S] cluster. Cys240 (nucleophile; cysteine thiosulfonate intermediate) is an active-site residue.

This sequence belongs to the PAPS reductase family. CysH subfamily. It depends on [4Fe-4S] cluster as a cofactor.

The protein localises to the cytoplasm. It carries out the reaction [thioredoxin]-disulfide + sulfite + AMP + 2 H(+) = adenosine 5'-phosphosulfate + [thioredoxin]-dithiol. Its pathway is sulfur metabolism; hydrogen sulfide biosynthesis; sulfite from sulfate. Its function is as follows. Catalyzes the formation of sulfite from adenosine 5'-phosphosulfate (APS) using thioredoxin as an electron donor. The chain is Adenosine 5'-phosphosulfate reductase from Neisseria meningitidis serogroup A / serotype 4A (strain DSM 15465 / Z2491).